The following is a 422-amino-acid chain: UPF0761 membrane protein LHK_02978 (422 aa).

A run of 6 helical transmembrane segments spans residues L44–F64, L102–D122, M141–G161, L178–L198, A212–L232, and A246–I266.

This sequence belongs to the UPF0761 family.

Its subcellular location is the cell inner membrane. In Laribacter hongkongensis (strain HLHK9), this protein is UPF0761 membrane protein LHK_02978.